Reading from the N-terminus, the 335-residue chain is Serine/threonine-protein kinase crk1 (335 aa).

In terms of domain architecture, Protein kinase spans 11–292 (YVKERKVGEG…AQQALEHHYF (282 aa)). ATP is bound by residues 17–25 (VGEGTYAVV) and Lys-40. Asp-133 acts as the Proton acceptor in catalysis. A Phosphoserine modification is found at Ser-162. Residue Ser-165 is modified to Phosphoserine; by CAK. At Ser-318 the chain carries Phosphoserine.

It belongs to the protein kinase superfamily. CMGC Ser/Thr protein kinase family. CDC2/CDKX subfamily. In terms of assembly, one of the nine subunits forming the core-TFIIH basal transcription factor. Interacts with mcs2 and tfb3.

Its subcellular location is the cytoplasm. The protein localises to the nucleus. The enzyme catalyses [DNA-directed RNA polymerase] + ATP = phospho-[DNA-directed RNA polymerase] + ADP + H(+). Protein kinase essential for cell proliferation, where it is required for completion of cytokinesis. Phosphorylates the C-terminal repeat domain (CTD) of RNA polymerase II. This chain is Serine/threonine-protein kinase crk1 (crk1), found in Schizosaccharomyces pombe (strain 972 / ATCC 24843) (Fission yeast).